A 933-amino-acid polypeptide reads, in one-letter code: Isoleucine--tRNA ligase (933 aa).

Residues 57 to 67 (PYANGNIHVGH) carry the 'HIGH' region motif. Glutamate 554 serves as a coordination point for L-isoleucyl-5'-AMP. A 'KMSKS' region motif is present at residues 595–599 (KMSKS). Position 598 (lysine 598) interacts with ATP.

The protein belongs to the class-I aminoacyl-tRNA synthetase family. IleS type 1 subfamily. In terms of assembly, monomer.

It localises to the cytoplasm. It carries out the reaction tRNA(Ile) + L-isoleucine + ATP = L-isoleucyl-tRNA(Ile) + AMP + diphosphate. Its function is as follows. Catalyzes the attachment of isoleucine to tRNA(Ile). As IleRS can inadvertently accommodate and process structurally similar amino acids such as valine, to avoid such errors it has two additional distinct tRNA(Ile)-dependent editing activities. One activity is designated as 'pretransfer' editing and involves the hydrolysis of activated Val-AMP. The other activity is designated 'posttransfer' editing and involves deacylation of mischarged Val-tRNA(Ile). This Streptococcus pyogenes serotype M18 (strain MGAS8232) protein is Isoleucine--tRNA ligase.